Here is a 181-residue protein sequence, read N- to C-terminus: Translation initiation factor IF-3 (181 aa).

It belongs to the IF-3 family. Monomer.

Its subcellular location is the cytoplasm. Its function is as follows. IF-3 binds to the 30S ribosomal subunit and shifts the equilibrium between 70S ribosomes and their 50S and 30S subunits in favor of the free subunits, thus enhancing the availability of 30S subunits on which protein synthesis initiation begins. This Idiomarina loihiensis (strain ATCC BAA-735 / DSM 15497 / L2-TR) protein is Translation initiation factor IF-3.